We begin with the raw amino-acid sequence, 370 residues long: Glutamate 5-kinase (370 aa).

Lys-13 contacts ATP. Residues Ser-52, Asp-139, and Asn-151 each contribute to the substrate site. ATP is bound by residues 171–172 (SD) and 211–217 (SGGMKSK). One can recognise a PUA domain in the interval 275–353 (KGELVLDRGA…AEIEAVLGYR (79 aa)).

It belongs to the glutamate 5-kinase family.

The protein resides in the cytoplasm. It catalyses the reaction L-glutamate + ATP = L-glutamyl 5-phosphate + ADP. It functions in the pathway amino-acid biosynthesis; L-proline biosynthesis; L-glutamate 5-semialdehyde from L-glutamate: step 1/2. Functionally, catalyzes the transfer of a phosphate group to glutamate to form L-glutamate 5-phosphate. The protein is Glutamate 5-kinase of Thermus thermophilus (strain ATCC BAA-163 / DSM 7039 / HB27).